We begin with the raw amino-acid sequence, 161 residues long: Regulator of ribonuclease activity A (161 aa).

The protein belongs to the RraA family. In terms of assembly, homotrimer. Binds to both RNA-binding sites in the C-terminal region of Rne and to RhlB.

It localises to the cytoplasm. In terms of biological role, globally modulates RNA abundance by binding to RNase E (Rne) and regulating its endonucleolytic activity. Can modulate Rne action in a substrate-dependent manner by altering the composition of the degradosome. Modulates RNA-binding and helicase activities of the degradosome. The chain is Regulator of ribonuclease activity A from Sodalis glossinidius (strain morsitans).